We begin with the raw amino-acid sequence, 878 residues long: Phosphoenolpyruvate carboxylase (878 aa).

Active-site residues include histidine 137 and lysine 545.

This sequence belongs to the PEPCase type 1 family. It depends on Mg(2+) as a cofactor.

The enzyme catalyses oxaloacetate + phosphate = phosphoenolpyruvate + hydrogencarbonate. Its function is as follows. Forms oxaloacetate, a four-carbon dicarboxylic acid source for the tricarboxylic acid cycle. This chain is Phosphoenolpyruvate carboxylase, found in Proteus mirabilis (strain HI4320).